The primary structure comprises 1191 residues: Rho GTPase-activating protein 20 (1191 aa).

Over residues 1–23 (MEAMSPQQETLGGQPGRSSSLTG) the composition is skewed to polar residues. Residues 1 to 45 (MEAMSPQQETLGGQPGRSSSLTGVSRLAGGSCTKKKMKTLAERRR) form a disordered region. The residue at position 46 (S46) is a Phosphoserine. The 103-residue stretch at 78 to 180 (SLVCSNRTLL…EQKDKWLSLL (103 aa)) folds into the PH domain. One can recognise a Ras-associating domain in the interval 194 to 295 (KSIPLKIFAK…TPFNLQEPFL (102 aa)). One can recognise a Rho-GAP domain in the interval 365-551 (ISLPNICEND…FLIENCLRIF (187 aa)). A phosphoserine mark is found at S704 and S730. Disordered regions lie at residues 768–791 (SKKNATTQNTKKKSLSGSEGNHVK), 926–1014 (RLNL…SRPA), 1052–1123 (KKAK…RHCS), and 1140–1191 (HEEI…TKDI). Residues 934-961 (SYSSLSSPGTSPSGSSVSSQDSAFSQIS) show a composition bias toward low complexity. 2 stretches are compositionally biased toward polar residues: residues 962-981 (EHSVFTPTETSSPIDCTFQA) and 1103-1116 (PVQSAQRCSSSPFQ). Over residues 1182–1191 (IEDRYLTKDI) the composition is skewed to basic and acidic residues.

In terms of tissue distribution, expressed predominantly in the brain. Lower expression is found in lymph nodes.

Functionally, GTPase activator for the Rho-type GTPases by converting them to an inactive GDP-bound state. This is Rho GTPase-activating protein 20 (ARHGAP20) from Homo sapiens (Human).